The sequence spans 215 residues: Calmodulin-like protein 5 (215 aa).

A disordered region spans residues 38–61 (KNSPPSPSTMLPSPSSSSAPTKRI). Residues 45–57 (STMLPSPSSSSAP) show a composition bias toward low complexity. EF-hand domains are found at residues 61-96 (IDPS…LGIY), 97-132 (IPDK…IVDE), 139-174 (TEEE…LGLK), and 177-212 (KTLD…GGFS). Ca(2+) is bound by residues Asp74, Asn76, Asp78, Arg80, Glu85, Asp110, Asn112, Asp114, Cys116, Glu121, Asp152, Asp154, Asp156, Glu163, Asp190, Asp192, Asp194, Arg196, and Glu201.

It belongs to the calmodulin family.

Its function is as follows. Potential calcium sensor. The polypeptide is Calmodulin-like protein 5 (CML5) (Arabidopsis thaliana (Mouse-ear cress)).